Here is a 311-residue protein sequence, read N- to C-terminus: Malate dehydrogenase (311 aa).

Residues 7 to 13 (GAAGGIG) and Asp34 contribute to the NAD(+) site. Positions 81 and 87 each coordinate substrate. Residues Asn94 and 117-119 (ITN) each bind NAD(+). Residues Asn119 and Arg153 each contribute to the substrate site. His177 functions as the Proton acceptor in the catalytic mechanism. Residue Met227 coordinates NAD(+).

It belongs to the LDH/MDH superfamily. MDH type 1 family. Homodimer.

It catalyses the reaction (S)-malate + NAD(+) = oxaloacetate + NADH + H(+). Catalyzes the reversible oxidation of malate to oxaloacetate. The protein is Malate dehydrogenase of Colwellia psychrerythraea (strain 34H / ATCC BAA-681) (Vibrio psychroerythus).